The sequence spans 419 residues: UDP-N-acetylglucosamine 1-carboxyvinyltransferase (419 aa).

Residue Lys-22 to Asn-23 participates in phosphoenolpyruvate binding. Arg-95 is a UDP-N-acetyl-alpha-D-glucosamine binding site. Cys-119 serves as the catalytic Proton donor. Position 119 is a 2-(S-cysteinyl)pyruvic acid O-phosphothioketal (Cys-119). Residues Lys-164–Val-167, Asp-308, and Ile-330 contribute to the UDP-N-acetyl-alpha-D-glucosamine site.

Belongs to the EPSP synthase family. MurA subfamily.

The protein resides in the cytoplasm. It carries out the reaction phosphoenolpyruvate + UDP-N-acetyl-alpha-D-glucosamine = UDP-N-acetyl-3-O-(1-carboxyvinyl)-alpha-D-glucosamine + phosphate. It functions in the pathway cell wall biogenesis; peptidoglycan biosynthesis. Its function is as follows. Cell wall formation. Adds enolpyruvyl to UDP-N-acetylglucosamine. This is UDP-N-acetylglucosamine 1-carboxyvinyltransferase from Rickettsia canadensis (strain McKiel).